The primary structure comprises 252 residues: Probable endonuclease 4 (252 aa).

Zn(2+) is bound by residues H56, H96, E129, D162, H165, H191, D204, H206, and E233.

It belongs to the AP endonuclease 2 family. Zn(2+) is required as a cofactor.

It catalyses the reaction Endonucleolytic cleavage to 5'-phosphooligonucleotide end-products.. In terms of biological role, endonuclease IV plays a role in DNA repair. It cleaves phosphodiester bonds at apurinic or apyrimidinic (AP) sites, generating a 3'-hydroxyl group and a 5'-terminal sugar phosphate. The sequence is that of Probable endonuclease 4 from Mycobacterium ulcerans (strain Agy99).